The chain runs to 72 residues: Putative snRNP Sm-like protein (72 aa).

The Sm domain occupies 4 to 72; the sequence is RPLDILNNAL…RGDNVVYVSP (69 aa).

It belongs to the snRNP Sm proteins family.

The polypeptide is Putative snRNP Sm-like protein (Methanosarcina barkeri (strain Fusaro / DSM 804)).